We begin with the raw amino-acid sequence, 343 residues long: Vancomycin C-type resistance protein VanC1 (343 aa).

Residues 134–336 form the ATP-grasp domain; sequence HQLADTMGIA…YEILVEQLIA (203 aa). 164 to 219 lines the ATP pocket; the sequence is IQDHGFPIFIKPNEAGSSKGITKVTDKTALQSALTTAFAYGSTVLIQKAIAGIEIG. Mg(2+) is bound by residues Asp-290, Glu-303, and Asn-305. Residues Asp-290, Glu-303, and Asn-305 each contribute to the Mn(2+) site.

Belongs to the D-alanine--D-alanine ligase family. Mg(2+) is required as a cofactor. The cofactor is Mn(2+).

It is found in the cell membrane. The enzyme catalyses D-serine + D-alanine + ATP = D-alanyl-D-serine + ADP + phosphate + H(+). Functionally, D-alanine--D-alanine ligase of altered specificity, which catalyzes synthesis of D-Ala-D-Ser; produces a peptidoglycan which does not terminate in D-alanine but in D-serine, thus probably reducing affinity for vancomycin. Together with VanT and VanXYC, required for vancomycin resistance in E.gallinarum strain BM4174. This is Vancomycin C-type resistance protein VanC1 from Enterococcus gallinarum.